We begin with the raw amino-acid sequence, 210 residues long: Na(+)-translocating NADH-quinone reductase subunit D (210 aa).

The next 6 membrane-spanning stretches (helical) occupy residues Ile-11 to Ala-31, Phe-42 to Ile-62, Val-70 to Leu-90, Val-103 to Met-123, Phe-131 to Phe-151, and Asn-178 to Ile-198.

The protein belongs to the NqrDE/RnfAE family. Composed of six subunits; NqrA, NqrB, NqrC, NqrD, NqrE and NqrF.

The protein resides in the cell inner membrane. It carries out the reaction a ubiquinone + n Na(+)(in) + NADH + H(+) = a ubiquinol + n Na(+)(out) + NAD(+). In terms of biological role, NQR complex catalyzes the reduction of ubiquinone-1 to ubiquinol by two successive reactions, coupled with the transport of Na(+) ions from the cytoplasm to the periplasm. NqrA to NqrE are probably involved in the second step, the conversion of ubisemiquinone to ubiquinol. The chain is Na(+)-translocating NADH-quinone reductase subunit D from Vibrio anguillarum (Listonella anguillarum).